The sequence spans 1354 residues: Enhancer of mRNA-decapping protein 4 homolog (1354 aa).

Positions 18–38 (PLSASSSPPPSVHRSPRCGKA) are disordered. Phosphoserine is present on S32. WD repeat units lie at residues 309–348 (EEDSLITCAALSPDGTTVAAACADGLVRFYQIYLFDVRNH) and 363–406 (CSLF…CLQT). The segment at 552-581 (ERSSLNSKRSQTPEDNLLIKEEPESPNSGT) is disordered. Residues 554 to 565 (SSLNSKRSQTPE) are compositionally biased toward polar residues. S561 carries the post-translational modification Phosphoserine. T563 bears the Phosphothreonine mark. S576 carries the post-translational modification Phosphoserine. T581 is modified (phosphothreonine). Residues S759, S762, and S763 each carry the phosphoserine modification. A coiled-coil region spans residues 765 to 803 (SREVQEIMATQDDADAYEAELENLDDDDDDEEEELANSS). Positions 788-799 (LDDDDDDEEEEL) are enriched in acidic residues. Disordered stretches follow at residues 788 to 811 (LDDDDDDEEEELANSSPLPEAVDG) and 838 to 884 (NTNN…AGGT). A compositionally biased stretch (low complexity) spans 853-884 (NNNTSVGSNSNNNTATTLSTSNTSSSNNAGGT). Coiled-coil stretches lie at residues 893 to 936 (ELNA…HSKQ), 969 to 1036 (NEHK…QAQM), and 1159 to 1188 (KHRTELTDAMLETQREVKSLEILLARQVQE). S1207 is subject to Phosphoserine. Phosphothreonine occurs at positions 1211 and 1317. Y1320 bears the Phosphotyrosine mark.

This sequence belongs to the WD repeat EDC4 family. In terms of assembly, homodimer. Interacts with Dcp1 and Dcp2. Interacts with Gyf.

The protein resides in the cytoplasm. It localises to the P-body. In terms of biological role, in the process of mRNA degradation, seems to play a role in mRNA decapping. Required for silencing a subset of endogenous miRNA targets. This chain is Enhancer of mRNA-decapping protein 4 homolog (Ge-1), found in Drosophila melanogaster (Fruit fly).